We begin with the raw amino-acid sequence, 112 residues long: Protein Churchill (112 aa).

Residues cysteine 2, cysteine 5, cysteine 30, cysteine 33, histidine 59, cysteine 61, cysteine 64, histidine 66, histidine 71, cysteine 88, and cysteine 91 each contribute to the Zn(2+) site.

Belongs to the Churchill family.

In terms of biological role, transcriptional activator that mediates FGF signaling during neural development. Plays a role in the regulation of cell movement. Does not bind DNA by itself. The protein is Protein Churchill (churc1) of Xenopus laevis (African clawed frog).